The chain runs to 351 residues: Tropomodulin-2 (351 aa).

A Phosphoserine modification is found at Ser25.

The protein belongs to the tropomodulin family. Binds to the N-terminus of tropomyosin and to actin. Binds to TMBr3 as well as to other low molecular mass tropomyosins (TM5a or TM5), but not to high molecular mass tropomyosins (TM2 or TMBr1). As to expression, neuronal-tissue specific.

The protein localises to the cytoplasm. Its subcellular location is the cytoskeleton. Its function is as follows. Blocks the elongation and depolymerization of the actin filaments at the pointed end. The Tmod/TM complex contributes to the formation of the short actin protofilament, which in turn defines the geometry of the membrane skeleton. This Rattus norvegicus (Rat) protein is Tropomodulin-2 (Tmod2).